Reading from the N-terminus, the 466-residue chain is 23S rRNA (uracil(1939)-C(5))-methyltransferase RlmD (466 aa).

The region spanning lysine 11 to lysine 69 is the TRAM domain. Cysteine 82, cysteine 88, cysteine 91, and cysteine 184 together coordinate [4Fe-4S] cluster. Glutamine 287, phenylalanine 316, asparagine 321, glutamate 337, asparagine 364, and aspartate 385 together coordinate S-adenosyl-L-methionine. Cysteine 411 (nucleophile) is an active-site residue.

This sequence belongs to the class I-like SAM-binding methyltransferase superfamily. RNA M5U methyltransferase family. RlmD subfamily.

The catalysed reaction is uridine(1939) in 23S rRNA + S-adenosyl-L-methionine = 5-methyluridine(1939) in 23S rRNA + S-adenosyl-L-homocysteine + H(+). Functionally, catalyzes the formation of 5-methyl-uridine at position 1939 (m5U1939) in 23S rRNA. The protein is 23S rRNA (uracil(1939)-C(5))-methyltransferase RlmD of Photobacterium profundum (strain SS9).